A 318-amino-acid polypeptide reads, in one-letter code: ATP-dependent (S)-NAD(P)H-hydrate dehydratase (318 aa).

The YjeF C-terminal domain occupies 3-313 (AREVFKRVIP…KEIGPAFDSL (311 aa)). (6S)-NADPHX-binding positions include glycine 119 and 172–178 (NTNEFKR). Residues 210 to 214 (KGSKD) and 229 to 238 (TSLRRCGGQG) each bind ATP. Aspartate 239 is a binding site for (6S)-NADPHX.

It belongs to the NnrD/CARKD family. Requires Mg(2+) as cofactor.

The protein localises to the cytoplasm. The enzyme catalyses (6S)-NADHX + ATP = ADP + phosphate + NADH + H(+). It catalyses the reaction (6S)-NADPHX + ATP = ADP + phosphate + NADPH + H(+). Catalyzes the dehydration of the S-form of NAD(P)HX at the expense of ATP, which is converted to ADP. Together with NAD(P)HX epimerase, which catalyzes the epimerization of the S- and R-forms, the enzyme allows the repair of both epimers of NAD(P)HX, a damaged form of NAD(P)H that is a result of enzymatic or heat-dependent hydration. The chain is ATP-dependent (S)-NAD(P)H-hydrate dehydratase from Batrachochytrium dendrobatidis (strain JAM81 / FGSC 10211) (Frog chytrid fungus).